A 731-amino-acid polypeptide reads, in one-letter code: RNA-binding protein RMD9-like, mitochondrial (731 aa).

A compositionally biased stretch (polar residues) spans 1–10; it reads MIRLAQQTQV. Disordered regions lie at residues 1–29, 77–133, and 590–630; these read MIRL…NSLT, GGNI…GNSI, and QNDR…FNNP. Residues 83–100 are compositionally biased toward low complexity; sequence NNNNHLAQNNSNNSNNHH. Basic residues predominate over residues 101-122; sequence NNNRNHHHNNNRNHHQNNHNHS. The residue at position 132 (Ser-132) is a Phosphoserine. Residues 598-617 are compositionally biased toward polar residues; it reads SNMNSTQISRTATPSPSLTP.

It belongs to the RMD9 family. In terms of assembly, monomer. Phosphorylated. Phosphorylation promotes binding to RNA.

The protein resides in the mitochondrion inner membrane. In terms of biological role, may be involved in the processing or stability of mitochondrial mRNAs. This Saccharomyces cerevisiae (strain ATCC 204508 / S288c) (Baker's yeast) protein is RNA-binding protein RMD9-like, mitochondrial.